The chain runs to 1353 residues: MASPPHQQLLHHHSTEVSCDSSGDSNSVRVKINPKQLSSNSHPKHCKYSISSSCSSSGDSGGVPRRVGGGGRLRRQKKLPQLFERASSRWWDPKFDSVNLEEACLERCFPQTQRRFRYALFYIGFACLLWSIYFAVHMRSRLIVMVAPALCFLLVCVGFFLFTFTKLYARHYAWTSLALTLLVFALTLAAQFQVLTPVSGRGDSSNLTATARPTDTCLSQVGSFSMCIEVLFLLYTVMHLPLYLSLCLGVAYSVLFETFGYHFRDEACFPSPGAGALHWELLSRGLLHGCIHAIGVHLFVMSQVRSRSTFLKVGQSIMHGKDLEVEKALKERMIHSVMPRIIADDLMKQGDEESENSVKRHATSSPKNRKKKSSIQKAPIAFRPFKMQQIEEVSILFADIVGFTKMSANKSAHALVGLLNDLFGRFDRLCEETKCEKISTLGDCYYCVAGCPEPRADHAYCCIEMGLGMIKAIEQFCQEKKEMVNMRVGVHTGTVLCGILGMRRFKFDVWSNDVNLANLMEQLGVAGKVHISEATAKYLDDRYEMEDGKVIERLGQSVVADQLKGLKTYLISGQRAKESRCSCAEALLSGFEVIDGSQVSSGPRGQGTASSGNVSDLAQTVKTFDNLKTCPSCGITFAPKSEAGAEGGAPQNGCQDEHKNSTKASGGPNPKTQNGLLSPPQEEKLTNSQTSLCEILQEKGRWAGVSLDQSALLPLRFKNIREKTDAHFVDVIKEDSLMKDYFFKPPINQFSLNFLDQELERSYRTSYQEEVIKNSPVKTFASPTFSSLLDVFLSTTVFLTLSTTCFLKYEAATVPPPPAALAVFSAALLLEVLSLAVSIRMVFFLEDVMACTKRLLEWIAGWLPRHCIGAILVSLPALAVYSHVTSEYETNIHFPVFTGSAALIAVVHYCNFCQLSSWMRSSLATVVGAGPLLLLYVSLCPDSSVLTSPLDAVQNFSSERNPCNSSVPRDLRRPASLIGQEVVLVFFLLLLLVWFLNREFEVSYRLHYHGDVEADLHRTKIQSMRDQADWLLRNIIPYHVAEQLKVSQTYSKNHDSGGVIFASIVNFSEFYEENYEGGKECYRVLNELIGDFDELLSKPDYSSIEKIKTIGATYMAASGLNTAQAQDGSHPQEHLQILFEFAKEMMRVVDDFNNNMLWFNFKLRVGFNHGPLTAGVIGTTKLLYDIWGDTVNIASRMDTTGVECRIQVSEESYRVLSKMGYDFDYRGTVNVKGKGQMKTYLYPKCTDHRVIPQHQLSISPDIRVQVDGSIGRSPTDEIANLVPSVQYVDKTSLGSDSSTQAKDAHLSPKRPWKEPVKAEERGRFGKAIEKDDCDETGIEEANELTKLNVSKSV.

Disordered regions lie at residues 1–27 (MASP…DSNS) and 49–71 (SISS…GGGG). Residues 1-117 (MASPPHQQLL…CFPQTQRRFR (117 aa)) are Cytoplasmic-facing. A compositionally biased stretch (polar residues) spans 16–27 (EVSCDSSGDSNS). The segment covering 49 to 66 (SISSSCSSSGDSGGVPRR) has biased composition (low complexity). Residues 118-138 (YALFYIGFACLLWSIYFAVHM) form a helical membrane-spanning segment. Residues 139–141 (RSR) are Extracellular-facing. A helical transmembrane segment spans residues 142–162 (LIVMVAPALCFLLVCVGFFLF). At 163-171 (TFTKLYARH) the chain is on the cytoplasmic side. A helical membrane pass occupies residues 172-192 (YAWTSLALTLLVFALTLAAQF). Residues 193–215 (QVLTPVSGRGDSSNLTATARPTD) lie on the Extracellular side of the membrane. Asn206 carries N-linked (GlcNAc...) asparagine glycosylation. Residues 216–235 (TCLSQVGSFSMCIEVLFLLY) traverse the membrane as a helical segment. Over 236-241 (TVMHLP) the chain is Cytoplasmic. Residues 242–259 (LYLSLCLGVAYSVLFETF) form a helical membrane-spanning segment. The Extracellular segment spans residues 260–280 (GYHFRDEACFPSPGAGALHWE). Residues 281-301 (LLSRGLLHGCIHAIGVHLFVM) traverse the membrane as a helical segment. Residues 302–786 (SQVRSRSTFL…VKTFASPTFS (485 aa)) lie on the Cytoplasmic side of the membrane. The tract at residues 349–375 (QGDEESENSVKRHATSSPKNRKKKSSI) is disordered. Residues 359–374 (KRHATSSPKNRKKKSS) are compositionally biased toward basic residues. The Guanylate cyclase 1 domain maps to 394-521 (SILFADIVGF…NDVNLANLME (128 aa)). Residues Asp399, Ile400, and Asp443 each coordinate Mg(2+). ATP-binding positions include 399 to 404 (DIVGFT), 441 to 443 (LGD), and Arg487. Ser610 is subject to Phosphoserine. The tract at residues 642–684 (EAGAEGGAPQNGCQDEHKNSTKASGGPNPKTQNGLLSPPQEEK) is disordered. Phosphoserine occurs at positions 688, 691, and 706. Residues 787 to 807 (SLLDVFLSTTVFLTLSTTCFL) traverse the membrane as a helical segment. Residues 808–818 (KYEAATVPPPP) lie on the Extracellular side of the membrane. Residues 819–839 (AALAVFSAALLLEVLSLAVSI) form a helical membrane-spanning segment. Over 840–867 (RMVFFLEDVMACTKRLLEWIAGWLPRHC) the chain is Cytoplasmic. Residues 868–888 (IGAILVSLPALAVYSHVTSEY) form a helical membrane-spanning segment. Residues 889-891 (ETN) are Extracellular-facing. A helical transmembrane segment spans residues 892–912 (IHFPVFTGSAALIAVVHYCNF). The Cytoplasmic segment spans residues 913–920 (CQLSSWMR). The helical transmembrane segment at 921 to 941 (SSLATVVGAGPLLLLYVSLCP) threads the bilayer. At 942 to 975 (DSSVLTSPLDAVQNFSSERNPCNSSVPRDLRRPA) the chain is on the extracellular side. N-linked (GlcNAc...) asparagine glycosylation is found at Asn955 and Asn964. A helical membrane pass occupies residues 976–996 (SLIGQEVVLVFFLLLLLVWFL). The Cytoplasmic portion of the chain corresponds to 997-1353 (NREFEVSYRL…LTKLNVSKSV (357 aa)). The Guanylate cyclase 2 domain occupies 1058–1198 (GVIFASIVNF…DTVNIASRMD (141 aa)). Residues Lys1108, 1185-1187 (DIW), 1192-1196 (NIASR), and Lys1232 contribute to the ATP site. Phosphoserine is present on residues Ser1257, Ser1259, Ser1295, and Ser1307. Polar residues predominate over residues 1292–1301 (SLGSDSSTQA). The interval 1292–1326 (SLGSDSSTQAKDAHLSPKRPWKEPVKAEERGRFGK) is disordered. The segment covering 1302 to 1326 (KDAHLSPKRPWKEPVKAEERGRFGK) has biased composition (basic and acidic residues).

Belongs to the adenylyl cyclase class-4/guanylyl cyclase family. Mg(2+) serves as cofactor. It depends on Mn(2+) as a cofactor. Detected in skeletal muscle, pancreas, lung, heart, kidney, liver, brain and placenta. Expressed in multiple cells of the lung, with expression highest in airway smooth muscle.

Its subcellular location is the cell membrane. The enzyme catalyses ATP = 3',5'-cyclic AMP + diphosphate. Its activity is regulated as follows. Insensitive to calcium/calmodulin, forskolin and somatostatin. Stimulated by beta-adrenergic receptor activation. Activity is down-regulated by calcium/calcineurin. In terms of biological role, adenylyl cyclase that catalyzes the formation of the signaling molecule cAMP in response to activation of G protein-coupled receptors. Contributes to signaling cascades activated by CRH (corticotropin-releasing factor), corticosteroids and beta-adrenergic receptors. This is Adenylate cyclase type 9 (ADCY9) from Homo sapiens (Human).